A 122-amino-acid polypeptide reads, in one-letter code: Large ribosomal subunit protein uL24 (122 aa).

This sequence belongs to the universal ribosomal protein uL24 family. In terms of assembly, part of the 50S ribosomal subunit.

Its function is as follows. One of two assembly initiator proteins, it binds directly to the 5'-end of the 23S rRNA, where it nucleates assembly of the 50S subunit. In terms of biological role, one of the proteins that surrounds the polypeptide exit tunnel on the outside of the subunit. The polypeptide is Large ribosomal subunit protein uL24 (Trichodesmium erythraeum (strain IMS101)).